Here is a 40-residue protein sequence, read N- to C-terminus: Large ribosomal subunit protein bL36 (40 aa).

Belongs to the bacterial ribosomal protein bL36 family.

The chain is Large ribosomal subunit protein bL36 from Coxiella burnetii (strain Dugway 5J108-111).